The chain runs to 278 residues: Biotin synthase (278 aa).

In terms of domain architecture, Radical SAM core spans 1–227 (MQIMLCAISN…QSVVMVAGGR (227 aa)). [4Fe-4S] cluster is bound by residues cysteine 16, cysteine 20, and cysteine 23. Positions 60, 95, and 153 each coordinate [2Fe-2S] cluster.

It belongs to the radical SAM superfamily. Biotin synthase family. Homodimer. [4Fe-4S] cluster serves as cofactor. Requires [2Fe-2S] cluster as cofactor.

It catalyses the reaction (4R,5S)-dethiobiotin + (sulfur carrier)-SH + 2 reduced [2Fe-2S]-[ferredoxin] + 2 S-adenosyl-L-methionine = (sulfur carrier)-H + biotin + 2 5'-deoxyadenosine + 2 L-methionine + 2 oxidized [2Fe-2S]-[ferredoxin]. Its pathway is cofactor biosynthesis; biotin biosynthesis; biotin from 7,8-diaminononanoate: step 2/2. Functionally, catalyzes the conversion of dethiobiotin (DTB) to biotin by the insertion of a sulfur atom into dethiobiotin via a radical-based mechanism. This Campylobacter jejuni subsp. jejuni serotype O:23/36 (strain 81-176) protein is Biotin synthase.